Reading from the N-terminus, the 248-residue chain is Probable transcriptional regulatory protein FTN_1028 (248 aa).

Belongs to the TACO1 family.

The protein resides in the cytoplasm. The polypeptide is Probable transcriptional regulatory protein FTN_1028 (Francisella tularensis subsp. novicida (strain U112)).